The chain runs to 355 residues: Carbohydrate sulfotransferase 10 (355 aa).

Over Met-1–Leu-6 the chain is Cytoplasmic. The chain crosses the membrane as a helical; Signal-anchor for type II membrane protein span at residues Leu-7–Leu-27. The Lumenal segment spans residues Thr-28–Phe-355. N-linked (GlcNAc...) asparagine glycosylation is found at Asn-93 and Asn-98. 3'-phosphoadenylyl sulfate-binding positions include Pro-126–Gln-132 and Arg-188–Ser-196. N-linked (GlcNAc...) asparagine glycosylation is present at Asn-316.

This sequence belongs to the sulfotransferase 2 family.

It localises to the golgi apparatus membrane. Catalyzes the transfer of sulfate to position 3 of terminal glucuronic acid of both protein- and lipid-linked oligosaccharides. Participates in biosynthesis of HNK-1 carbohydrate structure, a sulfated glucuronyl-lactosaminyl residue carried by many neural recognition molecules. The chain is Carbohydrate sulfotransferase 10 (chst10) from Xenopus laevis (African clawed frog).